Reading from the N-terminus, the 361-residue chain is Phenylalanine--tRNA ligase alpha subunit (361 aa).

Glutamate 260 is a binding site for Mg(2+).

Belongs to the class-II aminoacyl-tRNA synthetase family. Phe-tRNA synthetase alpha subunit type 1 subfamily. As to quaternary structure, tetramer of two alpha and two beta subunits. Requires Mg(2+) as cofactor.

The protein resides in the cytoplasm. The enzyme catalyses tRNA(Phe) + L-phenylalanine + ATP = L-phenylalanyl-tRNA(Phe) + AMP + diphosphate + H(+). The chain is Phenylalanine--tRNA ligase alpha subunit from Bartonella bacilliformis (strain ATCC 35685 / KC583 / Herrer 020/F12,63).